Reading from the N-terminus, the 354-residue chain is tRNA N6-adenosine threonylcarbamoyltransferase (354 aa).

Fe cation contacts are provided by His115 and His119. Residues 138–142, Asp171, Gly184, and Asn285 contribute to the substrate site; that span reads LVSGG. Asp313 is a binding site for Fe cation.

The protein belongs to the KAE1 / TsaD family. The cofactor is Fe(2+).

It localises to the cytoplasm. The catalysed reaction is L-threonylcarbamoyladenylate + adenosine(37) in tRNA = N(6)-L-threonylcarbamoyladenosine(37) in tRNA + AMP + H(+). Functionally, required for the formation of a threonylcarbamoyl group on adenosine at position 37 (t(6)A37) in tRNAs that read codons beginning with adenine. Is involved in the transfer of the threonylcarbamoyl moiety of threonylcarbamoyl-AMP (TC-AMP) to the N6 group of A37, together with TsaE and TsaB. TsaD likely plays a direct catalytic role in this reaction. This Albidiferax ferrireducens (strain ATCC BAA-621 / DSM 15236 / T118) (Rhodoferax ferrireducens) protein is tRNA N6-adenosine threonylcarbamoyltransferase.